A 259-amino-acid chain; its full sequence is 4-hydroxy-tetrahydrodipicolinate reductase (259 aa).

NAD(+)-binding positions include 9–14 (GAGGRM) and Glu-35. Arg-36 is an NADP(+) binding site. Residues 92 to 94 (GTT) and 116 to 119 (APNM) each bind NAD(+). His-149 (proton donor/acceptor) is an active-site residue. His-150 is a binding site for (S)-2,3,4,5-tetrahydrodipicolinate. Lys-153 serves as the catalytic Proton donor. (S)-2,3,4,5-tetrahydrodipicolinate is bound at residue 159-160 (GT).

Belongs to the DapB family.

The protein resides in the cytoplasm. It catalyses the reaction (S)-2,3,4,5-tetrahydrodipicolinate + NAD(+) + H2O = (2S,4S)-4-hydroxy-2,3,4,5-tetrahydrodipicolinate + NADH + H(+). The enzyme catalyses (S)-2,3,4,5-tetrahydrodipicolinate + NADP(+) + H2O = (2S,4S)-4-hydroxy-2,3,4,5-tetrahydrodipicolinate + NADPH + H(+). It functions in the pathway amino-acid biosynthesis; L-lysine biosynthesis via DAP pathway; (S)-tetrahydrodipicolinate from L-aspartate: step 4/4. Catalyzes the conversion of 4-hydroxy-tetrahydrodipicolinate (HTPA) to tetrahydrodipicolinate. This chain is 4-hydroxy-tetrahydrodipicolinate reductase, found in Oleidesulfovibrio alaskensis (strain ATCC BAA-1058 / DSM 17464 / G20) (Desulfovibrio alaskensis).